The following is a 128-amino-acid chain: Small ribosomal subunit protein uS11 (128 aa).

It belongs to the universal ribosomal protein uS11 family. In terms of assembly, part of the 30S ribosomal subunit. Interacts with proteins S7 and S18. Binds to IF-3.

Its function is as follows. Located on the platform of the 30S subunit, it bridges several disparate RNA helices of the 16S rRNA. Forms part of the Shine-Dalgarno cleft in the 70S ribosome. The polypeptide is Small ribosomal subunit protein uS11 (Onion yellows phytoplasma (strain OY-M)).